The primary structure comprises 419 residues: UDP-N-acetylglucosamine 1-carboxyvinyltransferase (419 aa).

A phosphoenolpyruvate-binding site is contributed by 22-23 (KN). Arg92 is a UDP-N-acetyl-alpha-D-glucosamine binding site. The active-site Proton donor is the Cys116. At Cys116 the chain carries 2-(S-cysteinyl)pyruvic acid O-phosphothioketal. Residues 121–125 (RPIDL), Asp306, and Ile328 contribute to the UDP-N-acetyl-alpha-D-glucosamine site.

The protein belongs to the EPSP synthase family. MurA subfamily.

It is found in the cytoplasm. It catalyses the reaction phosphoenolpyruvate + UDP-N-acetyl-alpha-D-glucosamine = UDP-N-acetyl-3-O-(1-carboxyvinyl)-alpha-D-glucosamine + phosphate. Its pathway is cell wall biogenesis; peptidoglycan biosynthesis. Functionally, cell wall formation. Adds enolpyruvyl to UDP-N-acetylglucosamine. Target for the antibiotic fosfomycin. The sequence is that of UDP-N-acetylglucosamine 1-carboxyvinyltransferase from Streptococcus pneumoniae (strain Hungary19A-6).